We begin with the raw amino-acid sequence, 2092 residues long: Nonribosomal peptide synthetase echPS (2092 aa).

The interval 13–406 is adenylation 1; the sequence is FSQRCCQNPD…GRRDRVTKIR (394 aa). One can recognise a Carrier 1 domain in the interval 524–600; sequence SGPLTIGQAI…SLIEKSRHET (77 aa). O-(pantetheine 4'-phosphoryl)serine is present on Ser561. A disordered region spans residues 596–626; it reads SRHETEDTPDSSAFATRTPEESSMPTQGPVT. Residues 605 to 624 show a composition bias toward polar residues; the sequence is DSSAFATRTPEESSMPTQGP. A condensation 1 region spans residues 624–1017; that stretch reads PVTPLQKRMV…YTSLLDAFLD (394 aa). The interval 1068 to 1446 is adenylation 2; that stretch reads ASLYPTHVAV…GRKDRQVKVR (379 aa). Positions 1544–1622 constitute a Carrier 2 domain; that stretch reads IKTTHLEKLI…DLVILVAQQQ (79 aa). An O-(pantetheine 4'-phosphoryl)serine modification is found at Ser1582. The condensation 2 stretch occupies residues 1663–2047; the sequence is SQSQSTFNVS…EALLLECFRI (385 aa).

The protein belongs to the NRP synthetase family. The cofactor is pantetheine 4'-phosphate.

It carries out the reaction L-tryptophan + L-alanine + 2 ATP = cyclo(L-tryptophyl-L-alanyl) + 2 ADP + 2 phosphate + 2 H(+). It functions in the pathway secondary metabolite biosynthesis. Its pathway is alkaloid biosynthesis. Its function is as follows. Nonribosomal peptide synthetase; part of the gene cluster that mediates the biosynthesis of echinulin family alkaloid. The pathway begins with the biosynthesis of the cyclic dipeptide cyclo-L-Trp-L-Ala (cyclo-TA) by the NRPS echPS via condensation of L-alanine and L-tryptophan. The prenyltransferase echPT1 then catalyzes the first prenylation step, a reverse prenylation reaction at C2, to yield preechinulin. Preechinulin is the substrate of the cytochrome P450 monooxygenase echP450 that catalyzes the formation of the double bond between C10 and C11 to produce neoechulin A. The unique prenyltransferase echPT2 functions as a competitive enzyme with echP450 for preechinulin metabolization and uses preechinulin for effective regiospecific prenylations. Preechinulin is prenylated by echPT2 at C5 or C7. C7-prenylation leads to accumulation of tardioxopiperazine B without further modification by echPT2. In contrast, the C5-prenylated tardioxopiperazine A can be prenylated again by echPT2, predominantly at C7 to form echinulin or less frequently at C4 to give variecolorin L. EchPT2 also accepts neoechilunin A to produce varlecolorin G (prenylation at C5) or isoechinulin A (prenylation at C7). EchPT2 further converts isoechinulin A into dehydroechinulin. Moreover, a yet unidentified enzyme can also convert neoechilunin A into neoechilunin B by introducing a double bond between positions C14 and C17 and thus provides a further substrate to echPT2 for C5 and C7 prenylation. The sequence is that of Nonribosomal peptide synthetase echPS from Aspergillus ruber (strain CBS 135680).